Consider the following 509-residue polypeptide: 2-isopropylmalate synthase (509 aa).

A Pyruvate carboxyltransferase domain is found at 5–267 (IQIFDTTLRD…QTALNLEETK (263 aa)). Residues Asp14, His202, His204, and Asn238 each contribute to the Mn(2+) site. Residues 391 to 509 (KLETLQLQYV…AAENVEKVGN (119 aa)) are regulatory domain.

It belongs to the alpha-IPM synthase/homocitrate synthase family. LeuA type 1 subfamily. In terms of assembly, homodimer. It depends on Mn(2+) as a cofactor.

Its subcellular location is the cytoplasm. The enzyme catalyses 3-methyl-2-oxobutanoate + acetyl-CoA + H2O = (2S)-2-isopropylmalate + CoA + H(+). Its pathway is amino-acid biosynthesis; L-leucine biosynthesis; L-leucine from 3-methyl-2-oxobutanoate: step 1/4. Functionally, catalyzes the condensation of the acetyl group of acetyl-CoA with 3-methyl-2-oxobutanoate (2-ketoisovalerate) to form 3-carboxy-3-hydroxy-4-methylpentanoate (2-isopropylmalate). This Staphylococcus aureus (strain MW2) protein is 2-isopropylmalate synthase.